Reading from the N-terminus, the 447-residue chain is N-succinylarginine dihydrolase (447 aa).

Substrate contacts are provided by residues 19 to 28 (AGLSFGNEAS), N110, and 137 to 138 (HR). Residue E174 is part of the active site. Residue R213 participates in substrate binding. Residue H249 is part of the active site. Residues D251 and N364 each contribute to the substrate site. Residue C370 is the Nucleophile of the active site.

It belongs to the succinylarginine dihydrolase family. As to quaternary structure, homodimer.

It carries out the reaction N(2)-succinyl-L-arginine + 2 H2O + 2 H(+) = N(2)-succinyl-L-ornithine + 2 NH4(+) + CO2. Its pathway is amino-acid degradation; L-arginine degradation via AST pathway; L-glutamate and succinate from L-arginine: step 2/5. Catalyzes the hydrolysis of N(2)-succinylarginine into N(2)-succinylornithine, ammonia and CO(2). The polypeptide is N-succinylarginine dihydrolase (Yersinia enterocolitica serotype O:8 / biotype 1B (strain NCTC 13174 / 8081)).